We begin with the raw amino-acid sequence, 485 residues long: METNESTEGSRSRSRSLDIQPSSEGLGPTSEPFPSSDDSPRSALAAATAAAAAAASAAAATAAFTTAKAAALSTKTPAPCSEFMEPSSDPSLLGEPCAGPGFTHNIAHGSLGFEPVYVSCIAQDTCTTTDHSSNPGPVPGSSSGPVLGSSSGAGHGSGSGSGPGCGSVPGSGSGPGPGSGPGSGPGHGSGSHPGPASGPGPDTGPDSELSPCIPPGFRNLVADRVPNYTSWSQHCPWEPQKQPPWEFLQVLEPGARGLWKPPDIKGKLMVCYETLPRGQCLLYNWEEERATNHLDQVPSMQDGSESFFFRHGHRGLLTMQLKSPMPSSTTQKDSYQPPGNVYWPLRGKREAMLEMLLQHQICKEVQAEQEPTRKLFEVESVTHHDYRMELAQAGTPAPTKPHDYRQEQPETFWIQRAPQLPGVSNIRTLDTPFRKNCSFSTPVPLSLGKLLPYEPENYPYQLGEISSLPCPGGRLGGGGGRMTPF.

3 disordered regions span residues 1-42 (METN…SPRS), 75-98 (KTPA…EPCA), and 127-215 (TTTD…CIPP). Residues 132-150 (SSNPGPVPGSSSGPVLGSS) show a composition bias toward low complexity. Positions 151-191 (SGAGHGSGSGSGPGCGSVPGSGSGPGPGSGPGSGPGHGSGS) are enriched in gly residues. Mn regions lie at residues 327–340 (SSTT…PPGN) and 379–393 (ESVT…LAQA).

It belongs to the SPAG8 family. In terms of assembly, microtubule inner protein component of sperm flagellar doublet microtubules. Interacts with FHL5 (via second LIM domain). Interacts with RANBP9. Expressed in testis (germ cells), but not in liver, kidney, prostate and small intestine. Expressed in airway epithelial cells.

It is found in the cytoplasm. The protein resides in the nucleus. Its subcellular location is the cytoplasmic vesicle. The protein localises to the secretory vesicle. It localises to the acrosome. It is found in the cytoskeleton. The protein resides in the microtubule organizing center. Its subcellular location is the spindle. The protein localises to the cilium axoneme. It localises to the flagellum axoneme. Functionally, microtubule inner protein (MIP) part of the dynein-decorated doublet microtubules (DMTs) in cilia axoneme, which is required for motile cilia beating. Plays a role in spermatogenesis by enhancing the binding of CREM isoform tau to its coactivator FHL5 and increasing the FHL5-regulated transcriptional activation of CREM isoform tau. Involved in the acrosome reaction and in binding of sperm to the zona pellucida. Plays a role in regulation of the cell cycle by controlling progression through the G2/M phase, possibly by delaying the activation of CDK1 which is required for entry into mitosis. May play a role in fertility and microtubule formation through interaction with RANBP9. The protein is Sperm-associated antigen 8 of Homo sapiens (Human).